We begin with the raw amino-acid sequence, 147 residues long: uncharacterized protein (147 aa).

This is an uncharacterized protein from Gallid herpesvirus 2 (strain Chicken/Md5/ATCC VR-987) (GaHV-2).